The chain runs to 359 residues: Probable dual-specificity RNA methyltransferase RlmN (359 aa).

E91 serves as the catalytic Proton acceptor. The region spanning 97 to 329 (QHYGHSVCVT…KKNGVNCVVR (233 aa)) is the Radical SAM core domain. A disulfide bridge connects residues C104 and C340. Residues C111, C115, and C118 each contribute to the [4Fe-4S] cluster site. Residues 163-164 (GE), S195, 218-220 (SLH), and N296 each bind S-adenosyl-L-methionine. C340 acts as the S-methylcysteine intermediate in catalysis.

It belongs to the radical SAM superfamily. RlmN family. [4Fe-4S] cluster is required as a cofactor.

Its subcellular location is the cytoplasm. It catalyses the reaction adenosine(2503) in 23S rRNA + 2 reduced [2Fe-2S]-[ferredoxin] + 2 S-adenosyl-L-methionine = 2-methyladenosine(2503) in 23S rRNA + 5'-deoxyadenosine + L-methionine + 2 oxidized [2Fe-2S]-[ferredoxin] + S-adenosyl-L-homocysteine. The enzyme catalyses adenosine(37) in tRNA + 2 reduced [2Fe-2S]-[ferredoxin] + 2 S-adenosyl-L-methionine = 2-methyladenosine(37) in tRNA + 5'-deoxyadenosine + L-methionine + 2 oxidized [2Fe-2S]-[ferredoxin] + S-adenosyl-L-homocysteine. Functionally, specifically methylates position 2 of adenine 2503 in 23S rRNA and position 2 of adenine 37 in tRNAs. This chain is Probable dual-specificity RNA methyltransferase RlmN, found in Streptococcus pyogenes serotype M3 (strain ATCC BAA-595 / MGAS315).